The following is a 206-amino-acid chain: MEVDINGESRSTLTTLPFPGAEANSPGKAEAEKPRCSSTPCSPMRRTVSGYQILHMDSNYLVGFTTGEELLKLAQKCTGGEESKAEAMPSLRSKQLDAGLARSSRLYKTRSRYYQPYEIPAVNGRRRRRMPSSGDKCTKSLPYEPYKALHGPLPLCLLKGKRAHSKSLDYLNLDKMIKEPADTEVLQYQLQHLTLRGGRVFARNNT.

Met-1 bears the N-acetylmethionine mark. The tract at residues 1–41 (MEVDINGESRSTLTTLPFPGAEANSPGKAEAEKPRCSSTPC) is disordered. A phosphoserine mark is found at Ser-25, Ser-140, and Ser-167.

The protein belongs to the UNC119-binding protein family. In terms of assembly, interacts with UNC119 and UNC119B; interaction preferentially takes place when UNC119 and UNC119B are unliganded with myristoylated proteins.

It localises to the cytoplasm. The protein localises to the cell projection. The protein resides in the cilium. In terms of biological role, regulates the macrophage function, by enhancing the resolution of inflammation and wound repair functions mediated by M2 macrophages. The regulation of macrophage function is, due at least in part, to its ability to inhibit glycolysis. May also play a role in trafficking of proteins via its interaction with UNC119 and UNC119B cargo adapters: may help the release of UNC119 and UNC119B cargo or the recycling of UNC119 and UNC119B. May play a role in ciliary membrane localization via its interaction with UNC119B and protein transport into photoreceptor cells. This chain is Macrophage immunometabolism regulator (MACIR), found in Pongo abelii (Sumatran orangutan).